The following is a 189-amino-acid chain: Leucine repeat adapter protein 25 (189 aa).

Serine 28 is modified (phosphoserine). The interval 55 to 81 is disordered; it reads LSRAARAPDGPRHAAGSANLGSAAGPR. The segment covering 68–79 has biased composition (low complexity); sequence AAGSANLGSAAG. One copy of the LRR repeat lies at 86 to 114; the sequence is LDSALAALRKEMVGLRQLDMSLLCQLWGL. The tract at residues 141–174 is disordered; that stretch reads DSSYPPDAGLSDDDEPPDASLPPDPPPLTVPQTH. Over residues 159–169 the composition is skewed to pro residues; it reads ASLPPDPPPLT. Position 188 is a phosphoserine (serine 188).

This sequence belongs to the FAM89 family. As to quaternary structure, interacts with SKI. Interacts (via LRR repeat) with CDC42BPA (via AGC-kinase C-terminal domain) and CDC42BPB (via AGC-kinase C-terminal domain). Interacts (via LRR repeat) with LIMK1 (via LIM zinc-binding domains). Forms a tripartite complex with CDC42BPA, CDC42BPB and LIMK1.

The protein resides in the cytoplasm. It is found in the cell projection. The protein localises to the lamellipodium. Negatively regulates TGF-beta-induced signaling; in cooperation with SKI prevents the translocation of SMAD2 from the nucleus to the cytoplasm in response to TGF-beta. Acts as an adapter that mediates the specific recognition of LIMK1 by CDC42BPA and CDC42BPB in the lamellipodia. LRAP25-mediated CDC42BPA/CDC42BPB targeting to LIMK1 and the lamellipodium results in LIMK1 activation and the subsequent phosphorylation of CFL1 which is important for lamellipodial F-actin regulation. In Rattus norvegicus (Rat), this protein is Leucine repeat adapter protein 25.